The chain runs to 859 residues: Bifunctional levopimaradiene synthase, chloroplastic (859 aa).

The N-terminal 52 residues, 1–52, are a transit peptide targeting the chloroplast; it reads MALLSSSLSSHIPTGAHHLTLNAYANTQCIPHFFSTLNAGTSAGKRSSLYLR. 6 residues coordinate Mg(2+): Asp392, Asp394, Asp611, Asp615, Asn755, and Glu763. Positions 392-395 match the DXDD motif motif; sequence DIDD. Positions 611-615 match the DDXXD motif motif; it reads DDLYD.

The protein belongs to the terpene synthase family. Tpsd subfamily. Requires Mg(2+) as cofactor. Mn(2+) is required as a cofactor.

It localises to the plastid. The protein resides in the chloroplast. The catalysed reaction is (+)-copalyl diphosphate = abieta-8(14),12-diene + diphosphate. The enzyme catalyses (+)-copalyl diphosphate = abieta-7,13-diene + diphosphate. The protein operates within secondary metabolite biosynthesis; terpenoid biosynthesis. It participates in terpene metabolism; oleoresin biosynthesis. Its function is as follows. Terpene synthase (di-TPS) involved in the biosynthesis of diterpene natural products included in conifer oleoresin secretions and volatile emissions; these compounds contribute to biotic and abiotic stress defense against herbivores and pathogens. Catalyzes the conversion of (+)-copalyl diphosphate ((+)-CPP) to isopimaradiene. In Picea sitchensis (Sitka spruce), this protein is Bifunctional levopimaradiene synthase, chloroplastic.